We begin with the raw amino-acid sequence, 1121 residues long: Ataxin-2 homolog (1121 aa).

The span at Met-1–Arg-10 shows a compositional bias: basic residues. The segment at Met-1–Gly-53 is disordered. The span at Ser-12–Gly-22 shows a compositional bias: gly residues. A compositionally biased stretch (polar residues) spans Tyr-27–Pro-36. The segment covering Ala-37–Ser-47 has biased composition (low complexity). The 76-residue stretch at Phe-71–Asp-146 folds into the Sm domain. Phosphoserine is present on residues Ser-219 and Ser-232. Disordered regions lie at residues Phe-270 to Gly-376, Gly-422 to Gln-458, Met-476 to Thr-935, and Gln-1039 to Thr-1076. Residues Glu-274 to Asn-310 are compositionally biased toward basic and acidic residues. Polar residues predominate over residues Glu-323 to Ser-347. Composition is skewed to gly residues over residues Ile-367–Gly-376 and Ser-434–Asn-448. Polar residues-rich tracts occupy residues Met-476–His-487 and Ala-499–Asn-524. Low complexity-rich tracts occupy residues Pro-552 to Gln-596, Pro-623 to Gln-684, Gln-697 to Pro-711, and Gln-720 to Pro-773. Over residues Ser-774–Thr-789 the composition is skewed to pro residues. Composition is skewed to low complexity over residues Ile-807–Pro-825 and Thr-835–Val-890. 2 stretches are compositionally biased toward pro residues: residues Pro-914–Met-926 and Pro-1048–Ser-1062.

The protein belongs to the ataxin-2 family.

The protein resides in the cytoplasm. Functionally, regulator of actin filament formation, though it does not directly assemble with actin filaments. Required for oocyte specification and oocyte positioning in the female germline. Also required for normal eye development and bristle morphology. This chain is Ataxin-2 homolog, found in Drosophila pseudoobscura pseudoobscura (Fruit fly).